Consider the following 492-residue polypeptide: Probable endopolygalacturonase D (492 aa).

An N-terminal signal peptide occupies residues 1–16; sequence MKRSALILSFLPLVFG. Cys151 and Cys166 form a disulfide bridge. PbH1 repeat units follow at residues 216–238, 258–280, 281–319, and 320–341; these read GTSVTITGVEGHVIDGNGAAYWD, MYNSRIENLYIQNWPVHCFEIES, TEHLTVSGLTLNNSAGDAANSKSDGDPAAHNSDGFDIKE, and SSYFTLENTWVHNQDDCVAVTS. N-linked (GlcNAc...) asparagine glycosylation occurs at Asn292. Asp334 serves as the catalytic Proton donor. A disulfide bridge links Cys336 with Cys352. His356 is an active-site residue. PbH1 repeat units follow at residues 371 to 392, 400 to 422, and 434 to 478; these read VNGVTFSNSQVISSQNGCRIKT, VYNIRYENITLSDISDYGIDVQQ, and TNGV…SITG. N-linked (GlcNAc...) asparagine glycans are attached at residues Asn407 and Asn441. 2 cysteine pairs are disulfide-bonded: Cys461-Cys466 and Cys484-Cys491.

The protein belongs to the glycosyl hydrolase 28 family.

The protein localises to the secreted. It carries out the reaction (1,4-alpha-D-galacturonosyl)n+m + H2O = (1,4-alpha-D-galacturonosyl)n + (1,4-alpha-D-galacturonosyl)m.. Its function is as follows. Involved in maceration and soft-rotting of plant tissue. Hydrolyzes the 1,4-alpha glycosidic bonds of de-esterified pectate in the smooth region of the plant cell wall. This chain is Probable endopolygalacturonase D (pgaD), found in Aspergillus oryzae (strain ATCC 42149 / RIB 40) (Yellow koji mold).